We begin with the raw amino-acid sequence, 211 residues long: Somatotropin (211 aa).

An N-terminal signal peptide occupies residues 1–23 (MASGFLLCPVLLAVFFMSPVEVG). Position 40 (H40) interacts with Zn(2+). Residues C73 and C184 are joined by a disulfide bond. Position 193 (E193) interacts with Zn(2+). C201 and C209 are disulfide-bonded.

The protein belongs to the somatotropin/prolactin family.

Its subcellular location is the secreted. Functionally, growth hormone plays an important role in growth control and is involved in the regulation of several anabolic processes. Implicated as an osmoregulatory substance important for seawater adaptation. This is Somatotropin (gh) from Lepisosteus osseus (Long-nosed gar).